Here is a 691-residue protein sequence, read N- to C-terminus: Glycine--tRNA ligase beta subunit (691 aa).

It belongs to the class-II aminoacyl-tRNA synthetase family. As to quaternary structure, tetramer of two alpha and two beta subunits.

It is found in the cytoplasm. The enzyme catalyses tRNA(Gly) + glycine + ATP = glycyl-tRNA(Gly) + AMP + diphosphate. The protein is Glycine--tRNA ligase beta subunit of Buchnera aphidicola subsp. Schizaphis graminum (strain Sg).